We begin with the raw amino-acid sequence, 601 residues long: Glutathione-regulated potassium-efflux system protein KefB (601 aa).

The next 13 helical transmembrane spans lie at 4–24 (SDLL…VPLA), 29–49 (IGAV…GLGF), 55–75 (EILH…GLEL), 87–107 (IFGV…GLLM), 115–135 (AAVI…LQLM), 152–172 (VLLF…LLAG), 177–197 (HFDW…LIGG), 207–227 (FIAD…LVLG), 230–250 (LFMD…GVLL), 262–282 (AIDP…GMSL), 284–304 (LGVL…LVAV), 324–344 (MQFA…FSTA), and 356–376 (SLLL…MKLV). Residues 400–519 (KPQVIVVGFG…AGVTQFSRET (120 aa)) form the RCK N-terminal domain.

Belongs to the monovalent cation:proton antiporter 2 (CPA2) transporter (TC 2.A.37) family. KefB subfamily. As to quaternary structure, interacts with the regulatory subunit KefG.

It localises to the cell inner membrane. Its function is as follows. Pore-forming subunit of a potassium efflux system that confers protection against electrophiles. Catalyzes K(+)/H(+) antiport. This is Glutathione-regulated potassium-efflux system protein KefB from Citrobacter koseri (strain ATCC BAA-895 / CDC 4225-83 / SGSC4696).